Consider the following 600-residue polypeptide: Cytidine monophosphate-N-acetylneuraminic acid hydroxylase (600 aa).

The 99-residue stretch at 9–107 (LSPVEVASLK…VEMDENNRLL (99 aa)) folds into the Rieske domain. [2Fe-2S] cluster contacts are provided by Cys-49, His-51, Cys-70, and His-73.

It belongs to the CMP-Neu5Ac hydroxylase family. It depends on [2Fe-2S] cluster as a cofactor.

It localises to the cytoplasm. The enzyme catalyses CMP-N-acetyl-beta-neuraminate + 2 Fe(II)-[cytochrome b5] + O2 + 2 H(+) = CMP-N-glycoloyl-beta-neuraminate + 2 Fe(III)-[cytochrome b5] + H2O. The protein operates within amino-sugar metabolism; N-acetylneuraminate metabolism. Functionally, sialic acids are components of carbohydrate chains of glycoconjugates and are involved in cell-cell recognition and cell-pathogen interactions. Catalyzes the conversion of CMP-N-acetylneuraminic acid (CMP-Neu5Ac) into its hydroxylated derivative CMP-N-glycolylneuraminic acid (CMP-Neu5Gc), a sialic acid abundantly expressed at the surface of many cells. The protein is Cytidine monophosphate-N-acetylneuraminic acid hydroxylase (CMAH) of Gorilla gorilla gorilla (Western lowland gorilla).